The chain runs to 355 residues: Histidinol-phosphate aminotransferase (355 aa).

Lysine 218 is subject to N6-(pyridoxal phosphate)lysine.

This sequence belongs to the class-II pyridoxal-phosphate-dependent aminotransferase family. Histidinol-phosphate aminotransferase subfamily. In terms of assembly, homodimer. The cofactor is pyridoxal 5'-phosphate.

The enzyme catalyses L-histidinol phosphate + 2-oxoglutarate = 3-(imidazol-4-yl)-2-oxopropyl phosphate + L-glutamate. The protein operates within amino-acid biosynthesis; L-histidine biosynthesis; L-histidine from 5-phospho-alpha-D-ribose 1-diphosphate: step 7/9. In Pelodictyon phaeoclathratiforme (strain DSM 5477 / BU-1), this protein is Histidinol-phosphate aminotransferase.